A 109-amino-acid polypeptide reads, in one-letter code: FK506-binding protein (109 aa).

A PPIase FKBP-type domain is found at 20 to 108 (GKEITVHYTG…IFEVELLKVY (89 aa)).

It belongs to the FKBP-type PPIase family.

The enzyme catalyses [protein]-peptidylproline (omega=180) = [protein]-peptidylproline (omega=0). Inhibited by FK506. In terms of biological role, PPIases accelerate the folding of proteins. This chain is FK506-binding protein (fbp), found in Neisseria meningitidis serogroup B (strain ATCC BAA-335 / MC58).